Here is a 1140-residue protein sequence, read N- to C-terminus: Eukaryotic translation initiation factor 3 subunit A (1140 aa).

In terms of domain architecture, PCI spans Leu319–Thr502. 3 stretches are compositionally biased toward basic and acidic residues: residues Gln589–Glu624, Ala830–Asp900, and Glu921–Ser984. Disordered stretches follow at residues Gln589–Ile632 and Ala830–Arg1140. Low complexity predominate over residues Ala987–Ala998. Composition is skewed to basic and acidic residues over residues Ser999 to Arg1050, Asp1058 to Gln1086, and Pro1109 to Asp1130.

It belongs to the eIF-3 subunit A family. Component of the eukaryotic translation initiation factor 3 (eIF-3) complex. The eIF-3 complex interacts with pix.

It localises to the cytoplasm. In terms of biological role, RNA-binding component of the eukaryotic translation initiation factor 3 (eIF-3) complex, which is involved in protein synthesis of a specialized repertoire of mRNAs and, together with other initiation factors, stimulates binding of mRNA and methionyl-tRNAi to the 40S ribosome. The eIF-3 complex specifically targets and initiates translation of a subset of mRNAs involved in cell proliferation. This Drosophila ananassae (Fruit fly) protein is Eukaryotic translation initiation factor 3 subunit A.